A 187-amino-acid chain; its full sequence is UPF0301 protein SG2023 (187 aa).

It belongs to the UPF0301 (AlgH) family.

This is UPF0301 protein SG2023 from Sodalis glossinidius (strain morsitans).